The sequence spans 473 residues: SHC-transforming protein 1 (473 aa).

Residues 1-26 (MNKLSGGGGRRTRVEGGQLGGEEWTR) are disordered. At Ser29 the chain carries Phosphoserine. An N6-acetyllysine modification is found at Lys44. The PID domain occupies 46–229 (MGPGVSYLVR…AGFDGSAWDE (184 aa)). Positions 216-314 (HDRMAGFDGS…PSSGRELFDD (99 aa)) are disordered. The interval 230–377 (EEEEPPDHQY…AMAEQLRGEP (148 aa)) is CH1. Residues Tyr239, Tyr240, and Tyr317 each carry the phosphotyrosine modification. A disordered region spans residues 328-348 (QAGAGAGPPNPTINGSAPRDL). Ser343 bears the Phosphoserine mark. Residues 378–469 (WFHGKLSRRE…GSELCLQQPV (92 aa)) enclose the SH2 domain.

As to quaternary structure, interacts with CPNE3; this interaction may mediate the binding of CPNE3 with ERBB2. Interacts with the Trk receptors NTRK1, NTRK2 and NTRK3; in a phosphotyrosine-dependent manner. Interacts with the NPXY motif of tyrosine-phosphorylated IGF1R and INSR in vitro via the PID domain. Once activated, binds to GRB2. Interacts with tyrosine-phosphorylated CD3T and DDR2. Interacts with the N-terminal region of APS. Interacts with phosphorylated LRP1 and IRS4. Interacts with INPP5D/SHIP1 and INPPL1/SHIP2. Interacts with ALK, GAB2, GRB7 and KIT. Interacts with PTPN6/SHP (tyrosine phosphorylated). Identified in a complex containing FGFR4, NCAM1, CDH2, PLCG1, FRS2, SRC, SHC1, GAP43 and CTTN. Interacts with FLT4 (tyrosine-phosphorylated). Interacts with EPHB1 and GRB2; activates the MAPK/ERK cascade to regulate cell migration. Interacts with PDGFRB (tyrosine-phosphorylated). Interacts with ERBB4. Interacts with TEK/TIE2 (tyrosine-phosphorylated). Interacts with PTK2/FAK1. Interacts with CEACAM1; this interaction is CEACAM1-phosphorylation-dependent and mediates interaction with EGFR or INSR resulting in decrease coupling of SHC1 to the MAPK3/ERK1-MAPK1/ERK2 pathway. Interacts (via PID domain) with PEAK1 (when phosphorylated). Found in a complex with PPP1CA, PPP1CC, SHC1 and PEAK1. Phosphorylated by activated epidermal growth factor receptor. Phosphorylated in response to KIT signaling. Tyrosine phosphorylated in response to FLT3 and FLT4 signaling and by ligand-activated ALK. Tyrosine phosphorylated by ligand-activated PDGFRB. Tyrosine phosphorylated by TEK/TIE2. May be tyrosine phosphorylated by activated PTK2/FAK1. Tyrosine phosphorylated by activated PTK2B/PYK2. Dephosphorylation by PTPN2 may regulate interaction with GRB2.

Its subcellular location is the cytoplasm. It is found in the cell junction. The protein resides in the focal adhesion. Functionally, signaling adapter that couples activated growth factor receptors to signaling pathways. Participates in a signaling cascade initiated by activated KIT and KITLG/SCF. Participates in signaling downstream of the angiopoietin receptor TEK/TIE2, and plays a role in the regulation of endothelial cell migration and sprouting angiogenesis. This Bos taurus (Bovine) protein is SHC-transforming protein 1 (SHC1).